The sequence spans 206 residues: uncharacterized protein (206 aa).

The interval 147-206 (REEKAQKSKSKSRNQDERGSPLDERLGPKVSDLTLMERIFQVRRKPRKSRRDRRSRVSKR) is disordered. Over residues 159–173 (RNQDERGSPLDERLG) the composition is skewed to basic and acidic residues. Over residues 187 to 206 (QVRRKPRKSRRDRRSRVSKR) the composition is skewed to basic residues.

This is an uncharacterized protein from Schizosaccharomyces pombe (strain 972 / ATCC 24843) (Fission yeast).